The sequence spans 763 residues: Forkhead box protein M1 (763 aa).

Positions 1 to 53 (MKTSPRRPLILKRRRLPLPVQNAPSETSEEEPKRSPAQQESNQAEASKEVAES) are disordered. Over residues 36–45 (PAQQESNQAE) the composition is skewed to polar residues. Residues lysine 163, lysine 201, and lysine 325 each participate in a glycyl lysine isopeptide (Lys-Gly) (interchain with G-Cter in SUMO2) cross-link. Residues 198 to 232 (RSIKQEMEEKENCHLEQRQVKVEEPSRPSASWQNS) are disordered. Over residues 200–223 (IKQEMEEKENCHLEQRQVKVEEPS) the composition is skewed to basic and acidic residues. A DNA-binding region (fork-head) is located at residues 235 to 327 (ERPPYSYMAM…LTLDQVFKPL (93 aa)). The disordered stretch occupies residues 329 to 351 (PGSPQLPEHLESQQKRPNPELRR). Serine 331 carries the post-translational modification Phosphoserine. Positions 336–351 (EHLESQQKRPNPELRR) are enriched in basic and acidic residues. Lysine 356 participates in a covalent cross-link: Glycyl lysine isopeptide (Lys-Gly) (interchain with G-Cter in SUMO2). Residue serine 376 is modified to Phosphoserine; by CHEK2. Residues lysine 422 and lysine 440 each participate in a glycyl lysine isopeptide (Lys-Gly) (interchain with G-Cter in SUMO2) cross-link. Residues 482–711 (PPLEEWPSPA…PGSPEPQVSG (230 aa)) form a disordered region. Position 489 is a phosphoserine; by GSK3 (serine 489). Residues 494 to 503 (FKEESSHSWE) are compositionally biased toward basic and acidic residues. Serine 522 bears the Phosphoserine mark. Residues 583–592 (DPASQLSYSQ) show a composition bias toward polar residues. A Phosphothreonine; by CDK1 modification is found at threonine 611. Threonine 620, threonine 627, and threonine 662 each carry phosphothreonine. The residue at position 693 (serine 693) is a Phosphoserine; by CDK1. A phosphoserine; by PLK1 mark is found at serine 730 and serine 739.

As to quaternary structure, interacts with PINT87aa which is encoded by the circular form of the long non-coding RNA LINC-PINT; the interaction inhibits FOXM1-mediated transcription of PHB2. Phosphorylated in M (mitotic) phase. Phosphorylation by the checkpoint kinase CHEK2 in response to DNA damage increases the FOXM1 protein stability probably stimulating the transcription of genes involved in DNA repair. Phosphorylated by CDK1 in late S and G2 phases, creating docking sites for the POLO box domains of PLK1. Subsequently, PLK1 binds and phosphorylates FOXM1, leading to activation of transcriptional activity and subsequent enhanced expression of key mitotic regulators. Phosphorylated by GSK3B leading to ubiquitination and proteasomal degradation. In terms of processing, ubiquitinated in a FBXW7-dependent manner leading to proteasomal degradation. Expressed in thymus, testis, small intestine, colon followed by ovary. Appears to be expressed only in adult organs containing proliferating/cycling cells or in response to growth factors. Also expressed in epithelial cell lines derived from tumors. Not expressed in resting cells. Isoform 2 is highly expressed in testis.

Its subcellular location is the nucleus. Functionally, transcription factor regulating the expression of cell cycle genes essential for DNA replication and mitosis. Plays a role in the control of cell proliferation. Also plays a role in DNA break repair, participating in the DNA damage checkpoint response. Promotes transcription of PHB2. The sequence is that of Forkhead box protein M1 (FOXM1) from Homo sapiens (Human).